The sequence spans 250 residues: Cyclin-Q (250 aa).

Met-1 is modified (N-acetylmethionine). Positions 1-10 are enriched in basic and acidic residues; sequence MEAVRPDSCE. Positions 1–22 are disordered; the sequence is MEAVRPDSCERGTAAARAEERP.

Belongs to the cyclin family. Cyclin-like FAM58 subfamily. In terms of assembly, associates with CDK10 to promote its kinase activity.

Its function is as follows. Activating cyclin for the cyclin-associated kinase CDK10. The protein is Cyclin-Q (Ccnq) of Rattus norvegicus (Rat).